A 273-amino-acid polypeptide reads, in one-letter code: Protein E6 (273 aa).

Zinc fingers lie at residues 27–63 (CIFC…CRDC) and 100–140 (CTVC…CSSC).

It belongs to the papillomaviridae E6 protein family. Forms homodimers. Interacts with ubiquitin-protein ligase UBE3A/E6-AP; this interaction stimulates UBE3A ubiquitin activity. Interacts with host BAK1.

Its subcellular location is the host cytoplasm. The protein resides in the host nucleus. Functionally, plays a major role in the induction and maintenance of cellular transformation. E6 associates with host UBE3A/E6-AP ubiquitin-protein ligase and modulates its activity. Protects host keratinocytes from apoptosis by mediating the degradation of host BAK1. May also inhibit host immune response. This is Protein E6 from Sylvilagus floridanus (Cottontail rabbit).